The sequence spans 152 residues: Transcriptional regulator MraZ (152 aa).

SpoVT-AbrB domains lie at 5–52 (ASAI…PIHE) and 81–124 (AHEV…DEQA).

It belongs to the MraZ family. In terms of assembly, forms oligomers.

It localises to the cytoplasm. Its subcellular location is the nucleoid. The chain is Transcriptional regulator MraZ from Shewanella putrefaciens (strain CN-32 / ATCC BAA-453).